A 428-amino-acid polypeptide reads, in one-letter code: UPF0597 protein BF3560 (428 aa).

Belongs to the UPF0597 family.

The polypeptide is UPF0597 protein BF3560 (Bacteroides fragilis (strain ATCC 25285 / DSM 2151 / CCUG 4856 / JCM 11019 / LMG 10263 / NCTC 9343 / Onslow / VPI 2553 / EN-2)).